A 366-amino-acid chain; its full sequence is UPF0329 protein ECU01_0130/ECU01_1480/ECU08_0060 (366 aa).

The segment at 325–366 (IRKEEKRIRKEEERAKNEEELLRMVESEEGKSGEGEEGCRRG) is disordered.

It belongs to the UPF0329 family.

The polypeptide is UPF0329 protein ECU01_0130/ECU01_1480/ECU08_0060 (Encephalitozoon cuniculi (strain GB-M1) (Microsporidian parasite)).